An 84-amino-acid polypeptide reads, in one-letter code: RNA-binding protein Hfq (84 aa).

Residues 11–71 form the Sm domain; the sequence is DTFLNHVRKN…ISTIMPGHPV (61 aa).

Belongs to the Hfq family. Homohexamer.

RNA chaperone that binds small regulatory RNA (sRNAs) and mRNAs to facilitate mRNA translational regulation in response to envelope stress, environmental stress and changes in metabolite concentrations. Also binds with high specificity to tRNAs. In Methylorubrum populi (strain ATCC BAA-705 / NCIMB 13946 / BJ001) (Methylobacterium populi), this protein is RNA-binding protein Hfq.